Here is a 259-residue protein sequence, read N- to C-terminus: Zinc import ATP-binding protein ZnuC (259 aa).

The 218-residue stretch at 6–223 folds into the ABC transporter domain; sequence VTVQSVSVTL…PAYHELFGPG (218 aa). Residue 38–45 coordinates ATP; it reads GPNGAGKS. The disordered stretch occupies residues 230-259; that stretch reads ALYTHDHDHDHDLHGNATHSHDHNGPCNHD. The span at 233-259 shows a compositional bias: basic and acidic residues; that stretch reads THDHDHDHDLHGNATHSHDHNGPCNHD.

It belongs to the ABC transporter superfamily. Zinc importer (TC 3.A.1.15.5) family. The complex is composed of two ATP-binding proteins (ZnuC), two transmembrane proteins (ZnuB) and a solute-binding protein (ZnuA).

Its subcellular location is the cell inner membrane. The catalysed reaction is Zn(2+)(out) + ATP(in) + H2O(in) = Zn(2+)(in) + ADP(in) + phosphate(in) + H(+)(in). Functionally, part of the ABC transporter complex ZnuABC involved in zinc import. Responsible for energy coupling to the transport system. In Alcanivorax borkumensis (strain ATCC 700651 / DSM 11573 / NCIMB 13689 / SK2), this protein is Zinc import ATP-binding protein ZnuC.